A 323-amino-acid chain; its full sequence is MDRQSAVAQLRAAAEQFARVHLDACDRWSVGLSGGPDSLALTAVAARLWPTTALIVDHGLQPGSATVAETARIQAISLGCVDARVLCVQVGAAGGREAAARSARYSALEEHRDGPVLLAHTLDDQAETVLLGLGRGSGARSIAGMRPYDPPWCRPLLGVRRSVTHAACRELGLTAWQDPHNTDRRFTRTRLRTEVLPLLEDVLGGGVAEALARTATALREDTDLIDTIAAQALPGAAVAGSRGQELSTSALTALPDAVRRRVIRGWLLAGGATGLTDRQIRGVDRLVTAWRGQGGVAVGSTLRGQRLVAGRRDGVLVLRREPV.

ATP is bound at residue 33 to 38 (SGGPDS).

It belongs to the tRNA(Ile)-lysidine synthase family.

It localises to the cytoplasm. The enzyme catalyses cytidine(34) in tRNA(Ile2) + L-lysine + ATP = lysidine(34) in tRNA(Ile2) + AMP + diphosphate + H(+). Functionally, ligates lysine onto the cytidine present at position 34 of the AUA codon-specific tRNA(Ile) that contains the anticodon CAU, in an ATP-dependent manner. Cytidine is converted to lysidine, thus changing the amino acid specificity of the tRNA from methionine to isoleucine. The polypeptide is tRNA(Ile)-lysidine synthase (Mycobacterium bovis (strain ATCC BAA-935 / AF2122/97)).